Reading from the N-terminus, the 700-residue chain is Elongation factor G (700 aa).

The region spanning 8-290 (ERYRNIGISA…AVIDYLPAPT (283 aa)) is the tr-type G domain. GTP-binding positions include 17–24 (AHIDAGKT), 88–92 (DTPGH), and 142–145 (NKMD).

The protein belongs to the TRAFAC class translation factor GTPase superfamily. Classic translation factor GTPase family. EF-G/EF-2 subfamily.

It localises to the cytoplasm. Catalyzes the GTP-dependent ribosomal translocation step during translation elongation. During this step, the ribosome changes from the pre-translocational (PRE) to the post-translocational (POST) state as the newly formed A-site-bound peptidyl-tRNA and P-site-bound deacylated tRNA move to the P and E sites, respectively. Catalyzes the coordinated movement of the two tRNA molecules, the mRNA and conformational changes in the ribosome. This chain is Elongation factor G (fusA), found in Pasteurella multocida (strain Pm70).